Consider the following 447-residue polypeptide: Exodeoxyribonuclease 7 large subunit (447 aa).

This sequence belongs to the XseA family. As to quaternary structure, heterooligomer composed of large and small subunits.

The protein resides in the cytoplasm. It carries out the reaction Exonucleolytic cleavage in either 5'- to 3'- or 3'- to 5'-direction to yield nucleoside 5'-phosphates.. Functionally, bidirectionally degrades single-stranded DNA into large acid-insoluble oligonucleotides, which are then degraded further into small acid-soluble oligonucleotides. The chain is Exodeoxyribonuclease 7 large subunit from Thioalkalivibrio sulfidiphilus (strain HL-EbGR7).